We begin with the raw amino-acid sequence, 535 residues long: MLLLWLSVFAASALAAPDRGAGGRRRGAAGGWPGAPNVVLVVSDSFDGRLTFYPGSQAVKLPFINLMKAHGTSFLNAYTNSPICCPSRAAMWSGLFTHLTESWNNFKGLDPNYTTWMDIMEKHGYRTQKFGKLDYTSGHHSISNRVEAWTRDVAFLLRQEGRPMINLIPKKTKVRVMEGDWKNTDRAVNWLRKEASNSTQPFVLYLGLNLPHPYPSPSSGENFGSSTFHTSLYWLKKVSYDAIKIPKWSPLSEMHPVDYYSSYTKNCTGKFTKKEIKNIRAFYYAMCAETDAMLGEIILALRQLDLLQNTIVIYTSDHGELAMEHRQFYKMSMYEASAHIPLLMMGPGIKANQQVSNVVSLVDIYPTMLDIAGAPLPQNLSGYSLLPLSSEMFWNEHKLKNLHPPWILSEFHGCNVNASTYMLRTNQWKYIAYSDGTSVLPQLFDLFSDPDELTNIATKFPEVTYSLDQKLRSIINYPKVSASVHQYNKEQFIKWKQSVGQNYSNVIANLRWHQDWLKEPRKYESAINQWLKTPH.

The first 22 residues, 1 to 22 (MLLLWLSVFAASALAAPDRGAG), serve as a signal peptide directing secretion. 2 residues coordinate Ca(2+): D44 and C84. C84 (nucleophile) is an active-site residue. The residue at position 84 (C84) is a 3-oxoalanine (Cys). N112 is a glycosylation site (N-linked (GlcNAc...) asparagine). Residue K132 participates in substrate binding. N197 carries an N-linked (GlcNAc...) asparagine glycan. H255 provides a ligand contact to substrate. N266 carries an N-linked (GlcNAc...) asparagine glycan. The Ca(2+) site is built by D317 and H318. N379, N417, and N502 each carry an N-linked (GlcNAc...) asparagine glycan.

This sequence belongs to the sulfatase family. Ca(2+) serves as cofactor. The conversion to 3-oxoalanine (also known as C-formylglycine, FGly), of a serine or cysteine residue in prokaryotes and of a cysteine residue in eukaryotes, is critical for catalytic activity. In terms of processing, the 75-kDa precursor undergoes proteolytic processing to yield a 23 kDa form. Post-translationally, N-glycosylated with both high mannose and complex type sugars.

The protein localises to the secreted. It is found in the lysosome. It carries out the reaction an aryl sulfate + H2O = a phenol + sulfate + H(+). The catalysed reaction is Hydrolysis of the 2-sulfate groups of the 2-O-sulfo-D-glucuronate residues of chondroitin sulfate, heparin and heparitin sulfate.. Catalyzes the hydrolysis of pseudosubstrates such as p-nitrocatechol sulfate and p-nitrophenyl sulfate. Catalyzes the hydrolysis of the 2-sulfate groups of the 2-O-sulfo-D-glucuronate residues of chondroitin sulfate, heparin and heparitin sulfate. Acts selectively on 2-sulfoglucuronate and lacks activity against 2-sulfoiduronate. This Canis lupus familiaris (Dog) protein is Arylsulfatase K (ARSK).